A 225-amino-acid chain; its full sequence is THAP domain-containing protein 1 A (225 aa).

The THAP-type zinc-finger motif lies at 5–57 (CSAYGCKNRYDKDKPISFHKFPLKRPLLCKKWEAAVRRAEFKPTKYSSICSDH). The stretch at 139–194 (VEDTVHQRRRIQQLEEQVDKLRKKLKIANQKCRRQERSLEKLEREVSEYREAKGSG) forms a coiled coil.

The protein belongs to the THAP1 family.

Its subcellular location is the nucleus. It is found in the nucleoplasm. Its function is as follows. DNA-binding transcription regulator that regulates endothelial cell proliferation and G1/S cell-cycle progression. Specifically binds the 5'-[AT]NTNN[GT]GGCA[AGT]-3' core DNA sequence and acts by modulating expression of pRB-E2F cell-cycle target genes. The sequence is that of THAP domain-containing protein 1 A (thap1-a) from Xenopus laevis (African clawed frog).